The following is a 378-amino-acid chain: Phosphoserine aminotransferase (378 aa).

Residue Arg-53 participates in L-glutamate binding. Residues Trp-117, Thr-167, Asp-190, and Gln-213 each contribute to the pyridoxal 5'-phosphate site. Lys-214 is modified (N6-(pyridoxal phosphate)lysine). 255 to 256 contacts pyridoxal 5'-phosphate; the sequence is NT.

The protein belongs to the class-V pyridoxal-phosphate-dependent aminotransferase family. SerC subfamily. In terms of assembly, homodimer. Pyridoxal 5'-phosphate serves as cofactor.

It is found in the cytoplasm. It carries out the reaction O-phospho-L-serine + 2-oxoglutarate = 3-phosphooxypyruvate + L-glutamate. It catalyses the reaction 4-(phosphooxy)-L-threonine + 2-oxoglutarate = (R)-3-hydroxy-2-oxo-4-phosphooxybutanoate + L-glutamate. Its pathway is amino-acid biosynthesis; L-serine biosynthesis; L-serine from 3-phospho-D-glycerate: step 2/3. The protein operates within cofactor biosynthesis; pyridoxine 5'-phosphate biosynthesis; pyridoxine 5'-phosphate from D-erythrose 4-phosphate: step 3/5. In terms of biological role, catalyzes the reversible conversion of 3-phosphohydroxypyruvate to phosphoserine and of 3-hydroxy-2-oxo-4-phosphonooxybutanoate to phosphohydroxythreonine. The sequence is that of Phosphoserine aminotransferase from Ralstonia pickettii (strain 12J).